A 110-amino-acid chain; its full sequence is Large ribosomal subunit protein P2C (110 aa).

A disordered region spans residues 83–110 (APAAEEAAKEEAKEEEESDEDMGFGLFD). Residues 95–104 (KEEEESDEDM) show a composition bias toward acidic residues. Ser100 carries the post-translational modification Phosphoserine.

It belongs to the eukaryotic ribosomal protein P1/P2 family. In terms of assembly, component of the large ribosomal subunit (LSU). Mature yeast ribosomes consist of a small (40S) and a large (60S) subunit. The 40S small subunit contains 1 molecule of ribosomal RNA (18S rRNA) and at least 33 different proteins. The large 60S subunit contains 3 rRNA molecules (25S, 5.8S and 5S rRNA) and at least 46 different proteins. The acidic ribosomal P-proteins form the stalk structure of the 60S subunit. They are organized as a pentameric complex in which uL10/P0 interacts with 2 heterodimers of P1 and P2 proteins.

Its subcellular location is the cytoplasm. Functionally, component of the ribosome, a large ribonucleoprotein complex responsible for the synthesis of proteins in the cell. The small ribosomal subunit (SSU) binds messenger RNAs (mRNAs) and translates the encoded message by selecting cognate aminoacyl-transfer RNA (tRNA) molecules. The large subunit (LSU) contains the ribosomal catalytic site termed the peptidyl transferase center (PTC), which catalyzes the formation of peptide bonds, thereby polymerizing the amino acids delivered by tRNAs into a polypeptide chain. The nascent polypeptides leave the ribosome through a tunnel in the LSU and interact with protein factors that function in enzymatic processing, targeting, and the membrane insertion of nascent chains at the exit of the ribosomal tunnel. In Schizosaccharomyces pombe (strain 972 / ATCC 24843) (Fission yeast), this protein is Large ribosomal subunit protein P2C (rpp203).